We begin with the raw amino-acid sequence, 51 residues long: MRDKIKLVSSAGTGHYYTTTKNKRTTPEKLEKKKYDPVVRKHVLYKEAKIK.

Belongs to the bacterial ribosomal protein bL33 family.

This chain is Large ribosomal subunit protein bL33, found in Nitrosococcus oceani (strain ATCC 19707 / BCRC 17464 / JCM 30415 / NCIMB 11848 / C-107).